The following is a 209-amino-acid chain: Uracil phosphoribosyltransferase (209 aa).

Residues Arg79, Arg104, and 131–139 (DPMLATGGS) contribute to the 5-phospho-alpha-D-ribose 1-diphosphate site. Residues Ile194 and 199–201 (GDA) contribute to the uracil site. Asp200 serves as a coordination point for 5-phospho-alpha-D-ribose 1-diphosphate.

The protein belongs to the UPRTase family. Mg(2+) is required as a cofactor.

The enzyme catalyses UMP + diphosphate = 5-phospho-alpha-D-ribose 1-diphosphate + uracil. It participates in pyrimidine metabolism; UMP biosynthesis via salvage pathway; UMP from uracil: step 1/1. Its activity is regulated as follows. Allosterically activated by GTP. Catalyzes the conversion of uracil and 5-phospho-alpha-D-ribose 1-diphosphate (PRPP) to UMP and diphosphate. This is Uracil phosphoribosyltransferase from Alkaliphilus oremlandii (strain OhILAs) (Clostridium oremlandii (strain OhILAs)).